We begin with the raw amino-acid sequence, 510 residues long: Lysine--tRNA ligase (510 aa).

Mg(2+) is bound by residues E420 and E427.

The protein belongs to the class-II aminoacyl-tRNA synthetase family. In terms of assembly, homodimer. Requires Mg(2+) as cofactor.

It localises to the cytoplasm. It catalyses the reaction tRNA(Lys) + L-lysine + ATP = L-lysyl-tRNA(Lys) + AMP + diphosphate. The sequence is that of Lysine--tRNA ligase from Clostridium novyi (strain NT).